Reading from the N-terminus, the 295-residue chain is Protoheme IX farnesyltransferase (295 aa).

9 helical membrane-spanning segments follow: residues 30-50, 51-71, 93-115, 119-136, 148-168, 175-195, 219-239, 244-264, and 275-295; these read LVVL…HPLI, AVIS…INMW, ISRS…IMMI, YISG…IYVY, IVIG…SVTG, LVLF…LSLL, IHIL…GLFL, LYEI…FQVF, and MFTY…LSSF.

This sequence belongs to the UbiA prenyltransferase family. Protoheme IX farnesyltransferase subfamily.

Its subcellular location is the cell inner membrane. It carries out the reaction heme b + (2E,6E)-farnesyl diphosphate + H2O = Fe(II)-heme o + diphosphate. The protein operates within porphyrin-containing compound metabolism; heme O biosynthesis; heme O from protoheme: step 1/1. Its function is as follows. Converts heme B (protoheme IX) to heme O by substitution of the vinyl group on carbon 2 of heme B porphyrin ring with a hydroxyethyl farnesyl side group. The sequence is that of Protoheme IX farnesyltransferase from Ehrlichia ruminantium (strain Welgevonden).